A 212-amino-acid chain; its full sequence is Pyridoxine/pyridoxamine 5'-phosphate oxidase (212 aa).

Substrate contacts are provided by residues 8 to 11 (RTDY) and Lys66. FMN-binding positions include 61 to 66 (RIVLLK), 76 to 77 (FT), Lys83, and Gln105. Residues Tyr123, Arg127, and Ser131 each coordinate substrate. Residues 140–141 (QS) and Trp184 each bind FMN. 190-192 (RLH) provides a ligand contact to substrate. Arg194 serves as a coordination point for FMN.

This sequence belongs to the pyridoxamine 5'-phosphate oxidase family. As to quaternary structure, homodimer. FMN serves as cofactor.

The catalysed reaction is pyridoxamine 5'-phosphate + O2 + H2O = pyridoxal 5'-phosphate + H2O2 + NH4(+). It catalyses the reaction pyridoxine 5'-phosphate + O2 = pyridoxal 5'-phosphate + H2O2. Its pathway is cofactor metabolism; pyridoxal 5'-phosphate salvage; pyridoxal 5'-phosphate from pyridoxamine 5'-phosphate: step 1/1. It participates in cofactor metabolism; pyridoxal 5'-phosphate salvage; pyridoxal 5'-phosphate from pyridoxine 5'-phosphate: step 1/1. Its function is as follows. Catalyzes the oxidation of either pyridoxine 5'-phosphate (PNP) or pyridoxamine 5'-phosphate (PMP) into pyridoxal 5'-phosphate (PLP). This is Pyridoxine/pyridoxamine 5'-phosphate oxidase from Ralstonia pickettii (strain 12J).